The primary structure comprises 757 residues: LPS-assembly protein LptD (757 aa).

A signal peptide spans methionine 1–alanine 20.

It belongs to the LptD family. In terms of assembly, component of the lipopolysaccharide transport and assembly complex. Interacts with LptE and LptA.

It is found in the cell outer membrane. Functionally, together with LptE, is involved in the assembly of lipopolysaccharide (LPS) at the surface of the outer membrane. This is LPS-assembly protein LptD from Idiomarina loihiensis (strain ATCC BAA-735 / DSM 15497 / L2-TR).